The sequence spans 229 residues: Ribonuclease T (229 aa).

In terms of domain architecture, Exonuclease spans 23–197 (VIIDVETAGF…YDTERTAKLF (175 aa)). Residues Asp-26, Glu-28, His-184, and Asp-189 each coordinate Mg(2+). His-184 acts as the Proton donor/acceptor in catalysis.

This sequence belongs to the RNase T family. In terms of assembly, homodimer. It depends on Mg(2+) as a cofactor.

Functionally, trims short 3' overhangs of a variety of RNA species, leaving a one or two nucleotide 3' overhang. Responsible for the end-turnover of tRNA: specifically removes the terminal AMP residue from uncharged tRNA (tRNA-C-C-A). Also appears to be involved in tRNA biosynthesis. This Haemophilus influenzae (strain PittGG) protein is Ribonuclease T.